The following is a 423-amino-acid chain: 4-hydroxy-3-methylbut-2-en-1-yl diphosphate synthase (flavodoxin) (423 aa).

The [4Fe-4S] cluster site is built by Cys307, Cys310, Cys353, and Glu360.

Belongs to the IspG family. [4Fe-4S] cluster serves as cofactor.

It carries out the reaction (2E)-4-hydroxy-3-methylbut-2-enyl diphosphate + oxidized [flavodoxin] + H2O + 2 H(+) = 2-C-methyl-D-erythritol 2,4-cyclic diphosphate + reduced [flavodoxin]. It functions in the pathway isoprenoid biosynthesis; isopentenyl diphosphate biosynthesis via DXP pathway; isopentenyl diphosphate from 1-deoxy-D-xylulose 5-phosphate: step 5/6. In terms of biological role, converts 2C-methyl-D-erythritol 2,4-cyclodiphosphate (ME-2,4cPP) into 1-hydroxy-2-methyl-2-(E)-butenyl 4-diphosphate. This is 4-hydroxy-3-methylbut-2-en-1-yl diphosphate synthase (flavodoxin) from Brucella anthropi (strain ATCC 49188 / DSM 6882 / CCUG 24695 / JCM 21032 / LMG 3331 / NBRC 15819 / NCTC 12168 / Alc 37) (Ochrobactrum anthropi).